The chain runs to 445 residues: Exodeoxyribonuclease 7 large subunit (445 aa).

It belongs to the XseA family. Heterooligomer composed of large and small subunits.

Its subcellular location is the cytoplasm. It carries out the reaction Exonucleolytic cleavage in either 5'- to 3'- or 3'- to 5'-direction to yield nucleoside 5'-phosphates.. In terms of biological role, bidirectionally degrades single-stranded DNA into large acid-insoluble oligonucleotides, which are then degraded further into small acid-soluble oligonucleotides. The chain is Exodeoxyribonuclease 7 large subunit from Xanthomonas euvesicatoria pv. vesicatoria (strain 85-10) (Xanthomonas campestris pv. vesicatoria).